The chain runs to 448 residues: Probable glycine dehydrogenase (decarboxylating) subunit 1 (448 aa).

It belongs to the GcvP family. N-terminal subunit subfamily. In terms of assembly, the glycine cleavage system is composed of four proteins: P, T, L and H. In this organism, the P 'protein' is a heterodimer of two subunits.

The catalysed reaction is N(6)-[(R)-lipoyl]-L-lysyl-[glycine-cleavage complex H protein] + glycine + H(+) = N(6)-[(R)-S(8)-aminomethyldihydrolipoyl]-L-lysyl-[glycine-cleavage complex H protein] + CO2. The glycine cleavage system catalyzes the degradation of glycine. The P protein binds the alpha-amino group of glycine through its pyridoxal phosphate cofactor; CO(2) is released and the remaining methylamine moiety is then transferred to the lipoamide cofactor of the H protein. This is Probable glycine dehydrogenase (decarboxylating) subunit 1 from Listeria monocytogenes serotype 4b (strain CLIP80459).